Consider the following 201-residue polypeptide: ATP-dependent Clp protease proteolytic subunit (201 aa).

The active-site Nucleophile is Ser105. The active site involves His130.

The protein belongs to the peptidase S14 family. Fourteen ClpP subunits assemble into 2 heptameric rings which stack back to back to give a disk-like structure with a central cavity, resembling the structure of eukaryotic proteasomes.

The protein localises to the cytoplasm. The catalysed reaction is Hydrolysis of proteins to small peptides in the presence of ATP and magnesium. alpha-casein is the usual test substrate. In the absence of ATP, only oligopeptides shorter than five residues are hydrolyzed (such as succinyl-Leu-Tyr-|-NHMec, and Leu-Tyr-Leu-|-Tyr-Trp, in which cleavage of the -Tyr-|-Leu- and -Tyr-|-Trp bonds also occurs).. Its function is as follows. Cleaves peptides in various proteins in a process that requires ATP hydrolysis. Has a chymotrypsin-like activity. Plays a major role in the degradation of misfolded proteins. This chain is ATP-dependent Clp protease proteolytic subunit, found in Aquifex aeolicus (strain VF5).